The primary structure comprises 306 residues: Peroxisome biogenesis factor 10 (306 aa).

Residues 1–52 (MHLSAHIDPLQIILCTEIDEACIQFIKSQIEGIARACGPRMQANFEGVLIPY) lie on the Peroxisomal matrix side of the membrane. Residues 53 to 84 (VDVLGKFLYRACCLRYATMGEEAARIVLAKQD) traverse the membrane as a helical segment. The Cytoplasmic portion of the chain corresponds to 85–147 (RSKGLVLATT…PEAVISKEKH (63 aa)). A helical membrane pass occupies residues 148–174 (LVYILNSFKPILLKLVSIIRFLCLTMK). Over 175–202 (GHCATVSQLLLGLKYISLDEINPEEKKK) the chain is Peroxisomal matrix. The helical transmembrane segment at 203–219 (VLTLLLLLGSRLIASIL) threads the bilayer. Topologically, residues 220–306 (QHSNSYFDQH…SSPSKIILLR (87 aa)) are cytoplasmic. Positions 256, 259, 271, 273, 276, 279, 290, and 293 each coordinate Zn(2+). Residues 256–294 (CSLCMEFIHCPAATECGHIFCWSCINGWTSKKSECPLCR) form an RING-type zinc finger.

The protein belongs to the pex2/pex10/pex12 family. Component of the PEX2-PEX10-PEX12 retrotranslocation channel, composed of PEX2, PEX10 and PEX12.

It is found in the peroxisome membrane. It catalyses the reaction S-ubiquitinyl-[E2 ubiquitin-conjugating enzyme]-L-cysteine + [acceptor protein]-L-lysine = [E2 ubiquitin-conjugating enzyme]-L-cysteine + N(6)-ubiquitinyl-[acceptor protein]-L-lysine.. The protein operates within protein modification; protein ubiquitination. The E3 ubiquitin-protein ligase activity is stimulated by PEX12. In terms of biological role, E3 ubiquitin-protein ligase component of a retrotranslocation channel required for peroxisome organization by mediating export of the PEX5 receptor from peroxisomes to the cytosol, thereby promoting PEX5 recycling. The retrotranslocation channel is composed of PEX2, PEX10 and PEX12; each subunit contributing transmembrane segments that coassemble into an open channel that specifically allows the passage of PEX5 through the peroxisomal membrane. PEX10 also regulates PEX5 recycling by acting as a E3 ubiquitin-protein ligase. When PEX5 recycling is compromised, PEX10 catalyzes polyubiquitination of PEX5 during its passage through the retrotranslocation channel, leading to its degradation. The chain is Peroxisome biogenesis factor 10 (pas4) from Schizosaccharomyces pombe (strain 972 / ATCC 24843) (Fission yeast).